The primary structure comprises 278 residues: Bicarbonate transport system permease protein CmpB (278 aa).

7 helical membrane-spanning segments follow: residues 24-44 (LDGI…WQIF), 93-113 (VAQG…LVGL), 124-144 (LFQF…LVAF), 151-171 (AIFV…AEGV), 196-216 (VVLP…IGLS), 217-237 (WLAI…GFFI), and 249-269 (IILA…FVAW). Residues 86-267 (TIASLTRVAQ…AVGLLLDRFV (182 aa)) enclose the ABC transmembrane type-1 domain.

It belongs to the binding-protein-dependent transport system permease family. The complex is composed of two ATP-binding proteins (CmpC and CmpD), a transmembrane protein (CmpB) and a solute-binding protein (CmpA).

It localises to the cell inner membrane. Functionally, part of the ABC transporter complex CmpABCD involved in bicarbonate transport. Probably responsible for the translocation of the substrate across the membrane. This is Bicarbonate transport system permease protein CmpB (cmpB) from Synechococcus sp. (strain ATCC 27144 / PCC 6301 / SAUG 1402/1) (Anacystis nidulans).